The chain runs to 325 residues: NADH-quinone oxidoreductase subunit H (325 aa).

8 helical membrane passes run 11 to 31 (VIIA…CGAF), 81 to 101 (VIFT…MAIV), 114 to 134 (IGLL…LFAG), 154 to 174 (LSYE…AGSF), 186 to 206 (LWNV…GVAV), 237 to 257 (FFVG…TLFF), 265 to 285 (LPPV…FILI), and 304 to 324 (VCLP…LYTA).

The protein belongs to the complex I subunit 1 family. As to quaternary structure, NDH-1 is composed of 13 different subunits. Subunits NuoA, H, J, K, L, M, N constitute the membrane sector of the complex.

It is found in the cell inner membrane. It carries out the reaction a quinone + NADH + 5 H(+)(in) = a quinol + NAD(+) + 4 H(+)(out). Functionally, NDH-1 shuttles electrons from NADH, via FMN and iron-sulfur (Fe-S) centers, to quinones in the respiratory chain. The immediate electron acceptor for the enzyme in this species is believed to be ubiquinone. Couples the redox reaction to proton translocation (for every two electrons transferred, four hydrogen ions are translocated across the cytoplasmic membrane), and thus conserves the redox energy in a proton gradient. This subunit may bind ubiquinone. In Erwinia tasmaniensis (strain DSM 17950 / CFBP 7177 / CIP 109463 / NCPPB 4357 / Et1/99), this protein is NADH-quinone oxidoreductase subunit H.